Reading from the N-terminus, the 902-residue chain is Ribonuclease E (902 aa).

The region spanning 39 to 119 (SNIYKGKITR…GTKGAALTTF (81 aa)) is the S1 motif domain. Mg(2+) is bound by residues Asp303 and Asp346. Positions 404 and 407 each coordinate Zn(2+). A required for zinc-mediated homotetramerization and catalytic activity region spans residues 404–407 (CPRC). Residues 881–902 (GKNSAGVHSATNFSNSPVSKLK) form a disordered region. Residues 889-902 (SATNFSNSPVSKLK) show a composition bias toward polar residues.

It belongs to the RNase E/G family. RNase E subfamily. As to quaternary structure, component of the RNA degradosome, which is a multiprotein complex involved in RNA processing and mRNA degradation. Within the RNA degradosome, RNase E assembles into a homotetramer formed by a dimer of dimers. It depends on Zn(2+) as a cofactor. Mg(2+) is required as a cofactor.

The protein resides in the cytoplasm. It is found in the cell inner membrane. The catalysed reaction is Endonucleolytic cleavage of single-stranded RNA in A- and U-rich regions.. In terms of biological role, endoribonuclease that plays a central role in RNA processing and decay. Required for the maturation of 5S and 16S rRNAs and the majority of tRNAs. Also involved in the degradation of most mRNAs. The chain is Ribonuclease E from Buchnera aphidicola subsp. Acyrthosiphon pisum (strain APS) (Acyrthosiphon pisum symbiotic bacterium).